The following is a 299-amino-acid chain: Glycerol-3-phosphate dehydrogenase [NAD(P)+] (299 aa).

Positions 11, 30, 31, and 79 each coordinate NADPH. Sn-glycerol 3-phosphate is bound by residues lysine 79, glycine 107, and serine 109. Alanine 111 contributes to the NADPH binding site. Sn-glycerol 3-phosphate is bound by residues lysine 161, aspartate 214, serine 224, arginine 225, and asparagine 226. Residue lysine 161 is the Proton acceptor of the active site. Arginine 225 contributes to the NADPH binding site. Valine 249 and glutamate 251 together coordinate NADPH.

Belongs to the NAD-dependent glycerol-3-phosphate dehydrogenase family.

It is found in the cytoplasm. The enzyme catalyses sn-glycerol 3-phosphate + NAD(+) = dihydroxyacetone phosphate + NADH + H(+). It carries out the reaction sn-glycerol 3-phosphate + NADP(+) = dihydroxyacetone phosphate + NADPH + H(+). The protein operates within membrane lipid metabolism; glycerophospholipid metabolism. Its function is as follows. Catalyzes the reduction of the glycolytic intermediate dihydroxyacetone phosphate (DHAP) to sn-glycerol 3-phosphate (G3P), the key precursor for phospholipid synthesis. In Nitratiruptor sp. (strain SB155-2), this protein is Glycerol-3-phosphate dehydrogenase [NAD(P)+].